Here is a 658-residue protein sequence, read N- to C-terminus: Threonine--tRNA ligase (658 aa).

Residues 1–64 (MSNTVSLQFP…GASGKLEIIT (64 aa)) enclose the TGS domain. Positions 246-548 (DHRRLGREMD…LIENFAGHMP (303 aa)) are catalytic. Cys-343, His-394, and His-525 together coordinate Zn(2+).

It belongs to the class-II aminoacyl-tRNA synthetase family. Homodimer. Zn(2+) serves as cofactor.

Its subcellular location is the cytoplasm. It carries out the reaction tRNA(Thr) + L-threonine + ATP = L-threonyl-tRNA(Thr) + AMP + diphosphate + H(+). In terms of biological role, catalyzes the attachment of threonine to tRNA(Thr) in a two-step reaction: L-threonine is first activated by ATP to form Thr-AMP and then transferred to the acceptor end of tRNA(Thr). Also edits incorrectly charged L-seryl-tRNA(Thr). This is Threonine--tRNA ligase from Brucella abortus (strain S19).